Consider the following 441-residue polypeptide: Glutamyl-tRNA reductase (441 aa).

Residues 49 to 52 (TCNR), serine 110, 115 to 117 (EPQ), and glutamine 121 each bind substrate. Cysteine 50 serves as the catalytic Nucleophile. Residue 190-195 (GAGEMA) coordinates NADP(+).

Belongs to the glutamyl-tRNA reductase family. As to quaternary structure, homodimer.

It carries out the reaction (S)-4-amino-5-oxopentanoate + tRNA(Glu) + NADP(+) = L-glutamyl-tRNA(Glu) + NADPH + H(+). The protein operates within porphyrin-containing compound metabolism; protoporphyrin-IX biosynthesis; 5-aminolevulinate from L-glutamyl-tRNA(Glu): step 1/2. Its function is as follows. Catalyzes the NADPH-dependent reduction of glutamyl-tRNA(Glu) to glutamate 1-semialdehyde (GSA). The protein is Glutamyl-tRNA reductase of Sulfurihydrogenibium sp. (strain YO3AOP1).